The sequence spans 317 residues: Low affinity immunoglobulin gamma Fc region receptor II-a (317 aa).

The first 33 residues, 1 to 33 (MTMETQMSQNVCPRNLWLLQPLTVLLLLASADS), serve as a signal peptide directing secretion. The Extracellular segment spans residues 34-217 (QAAAPPKAVL…PSMGSSSPMG (184 aa)). Ig-like C2-type domains follow at residues 39 to 118 (PKAV…VHLT) and 122 to 204 (EWLV…VTIT). 2 cysteine pairs are disulfide-bonded: Cys-62-Cys-104 and Cys-143-Cys-187. Asn-97 and Asn-178 each carry an N-linked (GlcNAc...) asparagine glycan. The chain crosses the membrane as a helical span at residues 218-240 (IIVAVVIATAVAAIVAAVVALIY). Over 241–317 (CRKKRISANS…PPNDHVNSNN (77 aa)) the chain is Cytoplasmic. Tyr-288 and Tyr-304 each carry phosphotyrosine; by SRC-type Tyr-kinases. The interval 292–317 (NPRAPTDDDKNIYLTLPPNDHVNSNN) is disordered.

Interacts with IGHG1. Interacts with INPP5D/SHIP1 and INPPL1/SHIP2, regulating its function. Interacts with APCS and FGR. Interacts with HCK. Post-translationally, phosphorylated by SRC-type Tyr-kinases such as LYN, BLK, FYN, HCK and SYK. As to expression, found on monocytes, neutrophils and eosinophil platelets.

The protein resides in the cell membrane. Its function is as follows. Binds to the Fc region of immunoglobulins gamma. Low affinity receptor. By binding to IgG it initiates cellular responses against pathogens and soluble antigens. Promotes phagocytosis of opsonized antigens. This chain is Low affinity immunoglobulin gamma Fc region receptor II-a (FCGR2A), found in Homo sapiens (Human).